The sequence spans 268 residues: Ribonuclease P protein subunit p30 (268 aa).

A2 bears the N-acetylalanine mark. S251 bears the Phosphoserine mark.

This sequence belongs to the eukaryotic/archaeal RNase P protein component 3 family. Component of nuclear RNase P and RNase MRP ribonucleoproteins. RNase P consists of a catalytic RNA moiety and about 10 protein subunits; POP1, POP4, POP5, POP7, RPP14, RPP21, RPP25, RPP30, RPP38 and RPP40. Within the RNase P complex, POP1, POP7 and RPP25 form the 'finger' subcomplex, POP5, RPP14, RPP40 and homodimeric RPP30 form the 'palm' subcomplex, and RPP21, POP4 and RPP38 form the 'wrist' subcomplex. All subunits of the RNase P complex interact with the catalytic RNA. Several subunits of RNase P are also part of the RNase MRP complex. RNase MRP consists of a catalytic RNA moiety and about 8 protein subunits; POP1, POP7, RPP25, RPP30, RPP38, RPP40 and possibly also POP4 and POP5.

Its subcellular location is the nucleus. It is found in the nucleolus. Functionally, component of ribonuclease P, a ribonucleoprotein complex that generates mature tRNA molecules by cleaving their 5'-ends. Also a component of the MRP ribonuclease complex, which cleaves pre-rRNA sequences. The polypeptide is Ribonuclease P protein subunit p30 (RPP30) (Bos taurus (Bovine)).